We begin with the raw amino-acid sequence, 710 residues long: Zinc finger and BTB domain-containing protein 24 (710 aa).

Residues 37 to 103 (CDITLIVENV…IYTGYLHASE (67 aa)) form the BTB domain. Disordered regions lie at residues 134–176 (APKP…EGRS) and 202–256 (EEDS…SRRR). Residues 159 to 171 (KRKRGRPRKANGL) constitute a DNA-binding region (a.T hook). Basic and acidic residues-rich tracts occupy residues 202–219 (EEDS…KESE) and 231–244 (PAEK…KAGD). 8 C2H2-type zinc fingers span residues 293-315 (ARCK…QRRH), 321-343 (FKCN…TRMH), 349-371 (YTCT…MSLH), 377-399 (FTCD…YRVH), 405-427 (PECS…LRTH), 433-455 (FTCE…IRIH), 461-483 (YSCS…CILH), and 489-511 (FSCP…LKIH). The segment at 651-676 (EQTTSSVPAADTGARATPVPSTRPGA) is disordered.

This sequence belongs to the krueppel C2H2-type zinc-finger protein family. In terms of assembly, interacts with MN1. Widely expressed. Highest level in liver, testis and kidney.

Its subcellular location is the nucleus. In terms of biological role, may be involved in BMP2-induced transcription. The polypeptide is Zinc finger and BTB domain-containing protein 24 (Zbtb24) (Mus musculus (Mouse)).